A 153-amino-acid chain; its full sequence is Superoxide dismutase [Cu-Zn] (153 aa).

Positions 45, 47, and 62 each coordinate Cu cation. Residues C56 and C145 are joined by a disulfide bond. Zn(2+)-binding residues include H62, H70, H79, and D82. H119 is a binding site for Cu cation.

The protein belongs to the Cu-Zn superoxide dismutase family. Homodimer. It depends on Cu cation as a cofactor. Zn(2+) serves as cofactor.

Its subcellular location is the cytoplasm. It catalyses the reaction 2 superoxide + 2 H(+) = H2O2 + O2. Functionally, destroys radicals which are normally produced within the cells and which are toxic to biological systems. The chain is Superoxide dismutase [Cu-Zn] from Drosophila erecta (Fruit fly).